The primary structure comprises 237 residues: Indole-3-glycerol phosphate synthase (237 aa).

Belongs to the TrpC family.

The enzyme catalyses 1-(2-carboxyphenylamino)-1-deoxy-D-ribulose 5-phosphate + H(+) = (1S,2R)-1-C-(indol-3-yl)glycerol 3-phosphate + CO2 + H2O. It participates in amino-acid biosynthesis; L-tryptophan biosynthesis; L-tryptophan from chorismate: step 4/5. The protein is Indole-3-glycerol phosphate synthase of Thermoplasma volcanium (strain ATCC 51530 / DSM 4299 / JCM 9571 / NBRC 15438 / GSS1).